The primary structure comprises 382 residues: Caspase-1-B (382 aa).

Residues Met-1–Glu-98 constitute a propeptide that is removed on maturation. Residues His-216 and Cys-270 contribute to the active site. A propeptide spanning residues Asp-283–Asp-292 is cleaved from the precursor.

This sequence belongs to the peptidase C14A family. As to quaternary structure, heterotetramer that consists of two anti-parallel arranged heterodimers, each one formed by a 20 kDa (Caspase-1 subunit p20) and a 10 kDa (Caspase-1 subunit p10) subunit. In terms of assembly, heterotetramer that consists of two anti-parallel arranged heterodimers, each one formed by a 20 kDa (Caspase-1 subunit p20) and a 10 kDa (Caspase-1 subunit p10) subunit. Can form a heterodimer with isoform epsilon which then has an inhibitory effect. In terms of processing, the two subunits are derived from the precursor sequence by an autocatalytic mechanism.

The protein resides in the cytoplasm. Its subcellular location is the cell membrane. The enzyme catalyses Strict requirement for an Asp residue at position P1 and has a preferred cleavage sequence of Tyr-Val-Ala-Asp-|-.. Its function is as follows. Thiol protease involved in a variety of inflammatory processes by proteolytically cleaving other proteins, such as the precursors of the inflammatory cytokines interleukin-1 beta (IL1B) and interleukin 18 (IL18) as well as the pyroptosis inducer Gasdermin-D (GSDMD), into active mature peptides. Plays a key role in cell immunity as an inflammatory response initiator: once activated through formation of an inflammasome complex, it initiates a pro-inflammatory response through the cleavage of the two inflammatory cytokines IL1B and IL18, releasing the mature cytokines which are involved in a variety of inflammatory processes. Cleaves a tetrapeptide after an Asp residue at position P1. Also initiates pyroptosis, a programmed lytic cell death pathway, through cleavage of GSDMD. In Xenopus laevis (African clawed frog), this protein is Caspase-1-B (casp1-b).